Consider the following 175-residue polypeptide: 6,7-dimethyl-8-ribityllumazine synthase (175 aa).

Residues Phe24, 58-60 (ALE), and 82-84 (AVI) contribute to the 5-amino-6-(D-ribitylamino)uracil site. 87–88 (ET) contacts (2S)-2-hydroxy-3-oxobutyl phosphate. Residue His90 is the Proton donor of the active site. Asn115 contacts 5-amino-6-(D-ribitylamino)uracil. A (2S)-2-hydroxy-3-oxobutyl phosphate-binding site is contributed by Arg129. The interval 150-175 (ALEPEEDDEDEDDEDEDFDDEEDDGR) is disordered. The segment covering 152–175 (EPEEDDEDEDDEDEDFDDEEDDGR) has biased composition (acidic residues).

This sequence belongs to the DMRL synthase family.

It carries out the reaction (2S)-2-hydroxy-3-oxobutyl phosphate + 5-amino-6-(D-ribitylamino)uracil = 6,7-dimethyl-8-(1-D-ribityl)lumazine + phosphate + 2 H2O + H(+). The protein operates within cofactor biosynthesis; riboflavin biosynthesis; riboflavin from 2-hydroxy-3-oxobutyl phosphate and 5-amino-6-(D-ribitylamino)uracil: step 1/2. In terms of biological role, catalyzes the formation of 6,7-dimethyl-8-ribityllumazine by condensation of 5-amino-6-(D-ribitylamino)uracil with 3,4-dihydroxy-2-butanone 4-phosphate. This is the penultimate step in the biosynthesis of riboflavin. The polypeptide is 6,7-dimethyl-8-ribityllumazine synthase (Bordetella bronchiseptica (strain ATCC BAA-588 / NCTC 13252 / RB50) (Alcaligenes bronchisepticus)).